The following is a 177-amino-acid chain: Large ribosomal subunit protein uL6 (177 aa).

This sequence belongs to the universal ribosomal protein uL6 family. As to quaternary structure, part of the 50S ribosomal subunit.

Its function is as follows. This protein binds to the 23S rRNA, and is important in its secondary structure. It is located near the subunit interface in the base of the L7/L12 stalk, and near the tRNA binding site of the peptidyltransferase center. The chain is Large ribosomal subunit protein uL6 from Rhodopseudomonas palustris (strain HaA2).